Reading from the N-terminus, the 156-residue chain is Lipoprotein signal peptidase (156 aa).

The chain crosses the membrane as a helical span at residues 62 to 82 (GNTVFMVLSAVIIAILSYTKI). Catalysis depends on residues aspartate 115 and aspartate 133. Residues 126 to 146 (WPAFNLADLTITCGVIVFLAM) form a helical membrane-spanning segment.

This sequence belongs to the peptidase A8 family.

Its subcellular location is the cell inner membrane. It carries out the reaction Release of signal peptides from bacterial membrane prolipoproteins. Hydrolyzes -Xaa-Yaa-Zaa-|-(S,diacylglyceryl)Cys-, in which Xaa is hydrophobic (preferably Leu), and Yaa (Ala or Ser) and Zaa (Gly or Ala) have small, neutral side chains.. It participates in protein modification; lipoprotein biosynthesis (signal peptide cleavage). In terms of biological role, this protein specifically catalyzes the removal of signal peptides from prolipoproteins. The sequence is that of Lipoprotein signal peptidase from Anaplasma phagocytophilum (strain HZ).